Consider the following 271-residue polypeptide: Orotidine 5'-phosphate decarboxylase (271 aa).

The active-site Proton donor is the Lys95.

Belongs to the OMP decarboxylase family. Type 2 subfamily.

The catalysed reaction is orotidine 5'-phosphate + H(+) = UMP + CO2. It participates in pyrimidine metabolism; UMP biosynthesis via de novo pathway; UMP from orotate: step 2/2. This is Orotidine 5'-phosphate decarboxylase from Ralstonia pickettii (strain 12J).